We begin with the raw amino-acid sequence, 62 residues long: uncharacterized protein (62 aa).

It belongs to the asfivirus C62L family.

This is an uncharacterized protein from African swine fever virus (strain Badajoz 1971 Vero-adapted) (Ba71V).